Reading from the N-terminus, the 348-residue chain is Methylthioribose-1-phosphate isomerase (348 aa).

Substrate-binding positions include 53-55, Arg93, and Gln197; that span reads RGA. Residue Asp238 is the Proton donor of the active site. 248-249 serves as a coordination point for substrate; the sequence is NK.

It belongs to the eIF-2B alpha/beta/delta subunits family. MtnA subfamily.

It carries out the reaction 5-(methylsulfanyl)-alpha-D-ribose 1-phosphate = 5-(methylsulfanyl)-D-ribulose 1-phosphate. It functions in the pathway amino-acid biosynthesis; L-methionine biosynthesis via salvage pathway; L-methionine from S-methyl-5-thio-alpha-D-ribose 1-phosphate: step 1/6. Catalyzes the interconversion of methylthioribose-1-phosphate (MTR-1-P) into methylthioribulose-1-phosphate (MTRu-1-P). The sequence is that of Methylthioribose-1-phosphate isomerase from Gloeobacter violaceus (strain ATCC 29082 / PCC 7421).